The chain runs to 326 residues: ATPase GET3 (326 aa).

32–39 is an ATP binding site; sequence KGGVGKTT. Asp61 is a catalytic residue. Glu244 and Asn271 together coordinate ATP. Residues Cys282 and Cys285 each contribute to the Zn(2+) site.

This sequence belongs to the arsA ATPase family. As to quaternary structure, homodimer.

It is found in the cytoplasm. The protein resides in the endoplasmic reticulum. Its function is as follows. ATPase required for the post-translational delivery of tail-anchored (TA) proteins to the endoplasmic reticulum. Recognizes and selectively binds the transmembrane domain of TA proteins in the cytosol. This complex then targets to the endoplasmic reticulum by membrane-bound receptors, where the tail-anchored protein is released for insertion. This process is regulated by ATP binding and hydrolysis. ATP binding drives the homodimer towards the closed dimer state, facilitating recognition of newly synthesized TA membrane proteins. ATP hydrolysis is required for insertion. Subsequently, the homodimer reverts towards the open dimer state, lowering its affinity for the membrane-bound receptor, and returning it to the cytosol to initiate a new round of targeting. This is ATPase GET3 from Phaeosphaeria nodorum (strain SN15 / ATCC MYA-4574 / FGSC 10173) (Glume blotch fungus).